The following is a 376-amino-acid chain: Queuine tRNA-ribosyltransferase (376 aa).

Aspartate 93 functions as the Proton acceptor in the catalytic mechanism. Residues 93–97 (DSGGF), aspartate 147, glutamine 190, and glycine 217 contribute to the substrate site. The tract at residues 248–254 (GVGKPDD) is RNA binding. Aspartate 267 acts as the Nucleophile in catalysis. Residues cysteine 305, cysteine 307, cysteine 310, and histidine 336 each contribute to the Zn(2+) site.

This sequence belongs to the queuine tRNA-ribosyltransferase family. In terms of assembly, homodimer. Within each dimer, one monomer is responsible for RNA recognition and catalysis, while the other monomer binds to the replacement base PreQ1. The cofactor is Zn(2+).

It carries out the reaction 7-aminomethyl-7-carbaguanine + guanosine(34) in tRNA = 7-aminomethyl-7-carbaguanosine(34) in tRNA + guanine. The protein operates within tRNA modification; tRNA-queuosine biosynthesis. Catalyzes the base-exchange of a guanine (G) residue with the queuine precursor 7-aminomethyl-7-deazaguanine (PreQ1) at position 34 (anticodon wobble position) in tRNAs with GU(N) anticodons (tRNA-Asp, -Asn, -His and -Tyr). Catalysis occurs through a double-displacement mechanism. The nucleophile active site attacks the C1' of nucleotide 34 to detach the guanine base from the RNA, forming a covalent enzyme-RNA intermediate. The proton acceptor active site deprotonates the incoming PreQ1, allowing a nucleophilic attack on the C1' of the ribose to form the product. After dissociation, two additional enzymatic reactions on the tRNA convert PreQ1 to queuine (Q), resulting in the hypermodified nucleoside queuosine (7-(((4,5-cis-dihydroxy-2-cyclopenten-1-yl)amino)methyl)-7-deazaguanosine). The protein is Queuine tRNA-ribosyltransferase of Jannaschia sp. (strain CCS1).